Reading from the N-terminus, the 550-residue chain is Methionine--tRNA ligase (550 aa).

The 'HIGH' region motif lies at 13-23 (PYANGEIHLGH). The Zn(2+) site is built by C144, C147, C157, and C160. The 'KMSKS' region motif lies at 329–333 (KMSKS). Residue K332 coordinates ATP.

Belongs to the class-I aminoacyl-tRNA synthetase family. MetG type 1 subfamily. In terms of assembly, monomer. Requires Zn(2+) as cofactor.

Its subcellular location is the cytoplasm. The catalysed reaction is tRNA(Met) + L-methionine + ATP = L-methionyl-tRNA(Met) + AMP + diphosphate. Functionally, is required not only for elongation of protein synthesis but also for the initiation of all mRNA translation through initiator tRNA(fMet) aminoacylation. This chain is Methionine--tRNA ligase, found in Ruthia magnifica subsp. Calyptogena magnifica.